A 109-amino-acid chain; its full sequence is METRATLRGVRLSVDKGRLVADLIRGKKVDQALNILNFTQKKAAGIIKKVVESAIANAEHNDGADIDELRVKTIYVEQGATLKRFSARAKGRGNSISKPTCHVYVVVGN.

It belongs to the universal ribosomal protein uL22 family. Part of the 50S ribosomal subunit.

This protein binds specifically to 23S rRNA; its binding is stimulated by other ribosomal proteins, e.g. L4, L17, and L20. It is important during the early stages of 50S assembly. It makes multiple contacts with different domains of the 23S rRNA in the assembled 50S subunit and ribosome. Functionally, the globular domain of the protein is located near the polypeptide exit tunnel on the outside of the subunit, while an extended beta-hairpin is found that lines the wall of the exit tunnel in the center of the 70S ribosome. The protein is Large ribosomal subunit protein uL22 of Polaromonas naphthalenivorans (strain CJ2).